A 299-amino-acid polypeptide reads, in one-letter code: MSESNRLRIAIQKSGRLSKESMKLLRSCGVKFNINEQRLIAHSDNLPIDLLRVRDDDIPGLVMDGVVDLGIIGENVLEEEQIERERLDKPASCIKLRELDFGACRLSLAVPNEFNYEDASSLEGLRIATSYPNLLRRYMQRKGITYNDCMLKGSVEVAPRAGLADGICDLVSTGATLEANGLYETEVIYRSNACIIQSSEVQLPAKQALIEKILSRINGVVRAKESKYILLHAPTETLEQIVALLPGAENPTVLPLNDDTNRVAIHAVSTEDLFWDTMEELTKLGASSILVMPIEKMMG.

It belongs to the ATP phosphoribosyltransferase family. Long subfamily. The cofactor is Mg(2+).

The protein localises to the cytoplasm. The enzyme catalyses 1-(5-phospho-beta-D-ribosyl)-ATP + diphosphate = 5-phospho-alpha-D-ribose 1-diphosphate + ATP. The protein operates within amino-acid biosynthesis; L-histidine biosynthesis; L-histidine from 5-phospho-alpha-D-ribose 1-diphosphate: step 1/9. Feedback inhibited by histidine. Its function is as follows. Catalyzes the condensation of ATP and 5-phosphoribose 1-diphosphate to form N'-(5'-phosphoribosyl)-ATP (PR-ATP). Has a crucial role in the pathway because the rate of histidine biosynthesis seems to be controlled primarily by regulation of HisG enzymatic activity. The protein is ATP phosphoribosyltransferase of Shewanella woodyi (strain ATCC 51908 / MS32).